Here is a 79-residue protein sequence, read N- to C-terminus: Cytoinsectotoxin-3 (79 aa).

Belongs to the cationic peptide 06 (cytoinsectotoxin) family. Expressed by the venom gland.

It is found in the secreted. In terms of biological role, insecticidal and antimicrobial peptide. Has insecticidal activity against larvae of flesh fly S.carnaria. Has antibacterial activity against Gram-positive bacterium B.subtilis B-501 (MIC=0.63 uM) and Gram-negative bacterium E.coli DH5alpha (MIC=2.5 uM). The sequence is that of Cytoinsectotoxin-3 from Lachesana tarabaevi (Spider).